The primary structure comprises 137 residues: Small ribosomal subunit protein uS12 (137 aa).

A disordered region spans residues 1-57 (MPTINQLVRKPRKSKVEKSKSPALNVGYNSLKRVPTNESAPQKRGVATRVGTMTPKK). Residue aspartate 102 is modified to 3-methylthioaspartic acid.

The protein belongs to the universal ribosomal protein uS12 family. In terms of assembly, part of the 30S ribosomal subunit. Contacts proteins S8 and S17. May interact with IF1 in the 30S initiation complex.

With S4 and S5 plays an important role in translational accuracy. Functionally, interacts with and stabilizes bases of the 16S rRNA that are involved in tRNA selection in the A site and with the mRNA backbone. Located at the interface of the 30S and 50S subunits, it traverses the body of the 30S subunit contacting proteins on the other side and probably holding the rRNA structure together. The combined cluster of proteins S8, S12 and S17 appears to hold together the shoulder and platform of the 30S subunit. This is Small ribosomal subunit protein uS12 from Streptococcus gordonii (strain Challis / ATCC 35105 / BCRC 15272 / CH1 / DL1 / V288).